The following is a 396-amino-acid chain: Ribosomal RNA large subunit methyltransferase I (396 aa).

A PUA domain is found at 2–81 (TVRLFLAKGR…EEINIEFFIR (80 aa)).

Belongs to the methyltransferase superfamily. RlmI family.

It localises to the cytoplasm. The catalysed reaction is cytidine(1962) in 23S rRNA + S-adenosyl-L-methionine = 5-methylcytidine(1962) in 23S rRNA + S-adenosyl-L-homocysteine + H(+). Functionally, specifically methylates the cytosine at position 1962 (m5C1962) of 23S rRNA. This Serratia proteamaculans (strain 568) protein is Ribosomal RNA large subunit methyltransferase I.